Here is a 382-residue protein sequence, read N- to C-terminus: Guanine nucleotide-binding protein G(s) subunit alpha (382 aa).

Polar residues predominate over residues 1 to 14 (MGCFGSPTSKQSDV). Residues 1–31 (MGCFGSPTSKQSDVNSEDSKSQKRRSDAISR) form a disordered region. Glycine 2 carries the N-palmitoyl glycine lipid modification. Cysteine 3 is lipidated: S-palmitoyl cysteine. A compositionally biased stretch (basic and acidic residues) spans 17 to 31 (EDSKSQKRRSDAISR). In terms of domain architecture, G-alpha spans 42–382 (ATHRLLLLGA…RMHLRQYELL (341 aa)). Positions 45-58 (RLLLLGAGESGKST) are G1 motif. GTP contacts are provided by residues 50 to 57 (GAGESGKS), 51 to 58 (AGESGKST), 186 to 192 (LRCRVLT), 211 to 215 (DVGGQ), 212 to 216 (VGGQR), 280 to 283 (NKQD), 281 to 284 (KQDL), and alanine 354. Serine 57 and threonine 192 together coordinate Mg(2+). Residues 184–192 (DILRCRVLT) form a G2 motif region. The segment at 207–216 (FHMFDVGGQR) is G3 motif. Positions 276–283 (ILFLNKQD) are G4 motif. The segment at 352–357 (TCAVDT) is G5 motif.

The protein belongs to the G-alpha family. G(s) subfamily. G proteins are composed of 3 units; alpha, beta and gamma. The alpha chain contains the guanine nucleotide binding site.

Guanine nucleotide-binding proteins (G proteins) are involved as modulators or transducers in various transmembrane signaling systems. The G(s) protein is involved in hormonal regulation of adenylate cyclase: it activates the cyclase. The chain is Guanine nucleotide-binding protein G(s) subunit alpha (G-salpha60A) from Drosophila pseudoobscura pseudoobscura (Fruit fly).